The chain runs to 178 residues: Large ribosomal subunit protein uL10 (178 aa).

This sequence belongs to the universal ribosomal protein uL10 family. Part of the ribosomal stalk of the 50S ribosomal subunit. The N-terminus interacts with L11 and the large rRNA to form the base of the stalk. The C-terminus forms an elongated spine to which L12 dimers bind in a sequential fashion forming a multimeric L10(L12)X complex.

Forms part of the ribosomal stalk, playing a central role in the interaction of the ribosome with GTP-bound translation factors. In Dictyoglomus turgidum (strain DSM 6724 / Z-1310), this protein is Large ribosomal subunit protein uL10.